Consider the following 370-residue polypeptide: Protein PELPK1 (370 aa).

The first 34 residues, 1-34 (MALMKKSLSAALLSSPLLIICLIALLADPFSVGA), serve as a signal peptide directing secretion. 52 consecutive repeat copies span residues 43–47 (PEIPK), 49–53 (PELPK), 54–58 (FEVPK), 60–64 (PEFPK), 65–69 (PELPK), 71–75 (PEFPK), 76–80 (PELPK), 82–86 (PEIPK), 87–91 (PELPK), 93–97 (PEIPK), 98–102 (PEETK), 104–108 (PDIPK), 109–113 (LELPK), 115–119 (PEIPK), 120–124 (PELPK), 126–130 (PEIPK), 131–135 (PELPK), 137–141 (PEIQK), 142–146 (PELPK), 148–152 (PEIPK), 153–157 (PELPK), 159–163 (PEIPK), 164–168 (PDLPK), 175–179 (PEVPK), 186–190 (PEAPK), 192–196 (PEIPK), 197–201 (PELPK), 203–207 (PEVPK), 214–218 (PEIQK), 219–223 (PELPK), 225–229 (PELPK), 231–235 (PEIQK), 236–240 (PELPK), 242–246 (PEVPK), 247–251 (LEAPK), 253–257 (PEIQK), 258–262 (PELPK), 264–268 (PELPK), 270–274 (PEIQK), 275–279 (PELPK), 281–285 (PEIQK), 286–290 (PELPK), 292–296 (PEVPK), 303–307 (PEVPK), 314–318 (PEIPK), 319–323 (PELPK), 325–329 (PEVPK), 330–334 (PELPK), 336–340 (PEITK), 344–348 (PEIPK), 355–359 (PQLPK), and 361–365 (PEFPK). The segment at 43–365 (PEIPKLPELP…QLPKLPEFPK (323 aa)) is 52 X 5 AA tandem repeat of P-[DEGQ]-[AEFLIV]-[QPT]-K. Residues 65–223 (PELPKLPEFP…PEIQKPELPK (159 aa)) are compositionally biased toward basic and acidic residues. Positions 65–370 (PELPKLPEFP…PEFPKVPGTP (306 aa)) are disordered. A compositionally biased stretch (basic and acidic residues) spans 232–262 (EIQKPELPKLPEVPKLEAPKVPEIQKPELPK). Composition is skewed to basic and acidic residues over residues 271–296 (EIQK…EVPK) and 306–334 (PKSE…ELPK).

Its subcellular location is the secreted. The protein resides in the cell wall. Positive regulator of germination and plant growth. This chain is Protein PELPK1, found in Arabidopsis thaliana (Mouse-ear cress).